The primary structure comprises 73 residues: MKKGIHPDYHMIDVKMTDGTVFQIRSTWGKEGEQMALEIDPLAHPAWTGGTAKLMDTGGRVSKFKNKYAGLGF.

It belongs to the bacterial ribosomal protein bL31 family. Type A subfamily. In terms of assembly, part of the 50S ribosomal subunit.

Binds the 23S rRNA. In Cereibacter sphaeroides (strain ATCC 17029 / ATH 2.4.9) (Rhodobacter sphaeroides), this protein is Large ribosomal subunit protein bL31.